The primary structure comprises 391 residues: Inositol-tetrakisphosphate 1-kinase 2 (391 aa).

2 residues coordinate 1D-myo-inositol 1,3,4-trisphosphate: lysine 90 and lysine 132. 2 residues coordinate ATP: arginine 167 and lysine 217. The 207-residue stretch at 178-384 (KLSDCSGSLF…FFQNLAQVKY (207 aa)) folds into the ATP-grasp domain. Histidine 228 and lysine 260 together coordinate 1D-myo-inositol 1,3,4-trisphosphate. Residues 249–260 (QEFVNHGGVMFK) and serine 275 each bind ATP. The Mg(2+) site is built by aspartate 340, aspartate 355, and asparagine 357. Asparagine 357 contributes to the 1D-myo-inositol 1,3,4-trisphosphate binding site.

Belongs to the ITPK1 family. As to quaternary structure, monomer. It depends on Mg(2+) as a cofactor. Expressed in seedling roots, cotyledons, rosette leaves, cauline leaves, stems, flowers, siliques and seeds.

It catalyses the reaction 1D-myo-inositol 3,4,5,6-tetrakisphosphate + ATP = 1D-myo-inositol 1,3,4,5,6-pentakisphosphate + ADP + H(+). It carries out the reaction 1D-myo-inositol 1,3,4-trisphosphate + ATP = 1D-myo-inositol 1,3,4,5-tetrakisphosphate + ADP + H(+). The catalysed reaction is 1D-myo-inositol 1,3,4-trisphosphate + ATP = 1D-myo-inositol 1,3,4,6-tetrakisphosphate + ADP + H(+). Kinase that can phosphorylate various inositol polyphosphate such as Ins(3,4,5,6)P4 or Ins(1,3,4)P3. Phosphorylates Ins(3,4,5,6)P4 to form InsP5. This reaction is thought to have regulatory importance, since Ins(3,4,5,6)P4 is an inhibitor of plasma membrane Ca(2+)-activated Cl(-) channels, while Ins(1,3,4,5,6)P5 is not. Also phosphorylates Ins(1,3,4)P3 or a racemic mixture of Ins(1,4,6)P3 and Ins(3,4,6)P3 to form InsP4. Ins(1,3,4,6)P4 is an essential molecule in the hexakisphosphate (InsP6) pathway. Plays a role in seed coat development and lipid polyester barrier formation. The protein is Inositol-tetrakisphosphate 1-kinase 2 (ITPK2) of Arabidopsis thaliana (Mouse-ear cress).